Reading from the N-terminus, the 446-residue chain is GTPase Der (446 aa).

2 consecutive EngA-type G domains span residues 2–166 and 179–354; these read TVVA…PEAP and IRVS…RQYN. GTP-binding positions include 8 to 15, 55 to 59, 118 to 121, 185 to 192, 232 to 236, and 297 to 300; these read GRPNVGKS, DTAGF, NKID, DTAGI, and NKWD. The KH-like domain occupies 355–440; sequence QRVTTGIVNR…PIRLIFRPRQ (86 aa).

This sequence belongs to the TRAFAC class TrmE-Era-EngA-EngB-Septin-like GTPase superfamily. EngA (Der) GTPase family. In terms of assembly, associates with the 50S ribosomal subunit.

Its function is as follows. GTPase that plays an essential role in the late steps of ribosome biogenesis. In Syntrophobacter fumaroxidans (strain DSM 10017 / MPOB), this protein is GTPase Der.